We begin with the raw amino-acid sequence, 298 residues long: MSEAPQHIPVLVNECLSLFADRNPKFFCDVTLGAGGHAEAFLSAYPSIVSYDGSDRDTMALSLAKERLEKFGNRVHLHHASFEDLAQNPRENVYDGILADLGVSSMQLDTLSRGFSFQGDDHDLDMRMDTSKGTTASEVLNTLREEDLGRIFREYGEEPQWKNAAKAIVQFRRHKKIITVRDLKEATTRVFPSYRLRKKIHPLTLIFQALRVYVNQEDVQLKVFLESAMRWLAPEGRLIIISFCSSEDRPVKWFFREAEAMGVGKILTKKVVMPTYEETRKNPRCRSAKLRCFEKKSS.

S-adenosyl-L-methionine contacts are provided by residues 35–37 (GGH), D55, F82, D100, and Q107.

This sequence belongs to the methyltransferase superfamily. RsmH family.

It is found in the cytoplasm. The enzyme catalyses cytidine(1402) in 16S rRNA + S-adenosyl-L-methionine = N(4)-methylcytidine(1402) in 16S rRNA + S-adenosyl-L-homocysteine + H(+). Its function is as follows. Specifically methylates the N4 position of cytidine in position 1402 (C1402) of 16S rRNA. This Chlamydia felis (strain Fe/C-56) (Chlamydophila felis) protein is Ribosomal RNA small subunit methyltransferase H.